A 709-amino-acid chain; its full sequence is DNA ligase (709 aa).

Residues 34 to 38 (DAEYD), 83 to 84 (SL), and Glu115 contribute to the NAD(+) site. Lys117 acts as the N6-AMP-lysine intermediate in catalysis. The NAD(+) site is built by Arg138, Glu185, Lys301, and Lys325. Zn(2+)-binding residues include Cys419, Cys422, Cys437, and Cys443. A BRCT domain is found at 602-691 (RQSDTLAGKT…AEPPPSPPPP (90 aa)). The interval 679 to 709 (GTTAEPPPSPPPPPPETNTDGNQLLLPLDGE) is disordered. The span at 683–694 (EPPPSPPPPPPE) shows a compositional bias: pro residues.

It belongs to the NAD-dependent DNA ligase family. LigA subfamily. Mg(2+) is required as a cofactor. The cofactor is Mn(2+).

It carries out the reaction NAD(+) + (deoxyribonucleotide)n-3'-hydroxyl + 5'-phospho-(deoxyribonucleotide)m = (deoxyribonucleotide)n+m + AMP + beta-nicotinamide D-nucleotide.. DNA ligase that catalyzes the formation of phosphodiester linkages between 5'-phosphoryl and 3'-hydroxyl groups in double-stranded DNA using NAD as a coenzyme and as the energy source for the reaction. It is essential for DNA replication and repair of damaged DNA. This Chloroflexus aurantiacus (strain ATCC 29364 / DSM 637 / Y-400-fl) protein is DNA ligase.